The following is a 102-amino-acid chain: Small ribosomal subunit protein uS10 (102 aa).

It belongs to the universal ribosomal protein uS10 family. As to quaternary structure, part of the 30S ribosomal subunit.

Its function is as follows. Involved in the binding of tRNA to the ribosomes. In Methanosphaera stadtmanae (strain ATCC 43021 / DSM 3091 / JCM 11832 / MCB-3), this protein is Small ribosomal subunit protein uS10.